A 276-amino-acid chain; its full sequence is 2-dehydro-3-deoxyphosphooctonate aldolase (276 aa).

It belongs to the KdsA family.

The protein localises to the cytoplasm. It carries out the reaction D-arabinose 5-phosphate + phosphoenolpyruvate + H2O = 3-deoxy-alpha-D-manno-2-octulosonate-8-phosphate + phosphate. The protein operates within carbohydrate biosynthesis; 3-deoxy-D-manno-octulosonate biosynthesis; 3-deoxy-D-manno-octulosonate from D-ribulose 5-phosphate: step 2/3. It participates in bacterial outer membrane biogenesis; lipopolysaccharide biosynthesis. This is 2-dehydro-3-deoxyphosphooctonate aldolase from Xanthomonas euvesicatoria pv. vesicatoria (strain 85-10) (Xanthomonas campestris pv. vesicatoria).